Here is a 736-residue protein sequence, read N- to C-terminus: Oligopeptide transporter 6 (736 aa).

Transmembrane regions (helical) follow at residues 43–63 (MWVL…FFWY), 66–86 (MPLS…GHLM), 116–136 (VLIT…HILS), 148–168 (FLPA…WAGL), 210–230 (FFLI…YLFT), 258–278 (LGIG…GSPL), 288–308 (VAIG…WLNI), 357–377 (FFAV…VHVL), 412–432 (VPLW…MFIS), 443–463 (WWGV…IGVI), 489–511 (PVAN…TFIS), 527–547 (FMAQ…TAWW), 602–622 (WFFL…KMFP), 645–665 (ATAV…HFIF), and 678–698 (VLSG…FLAL).

This sequence belongs to the oligopeptide OPT transporter (TC 2.A.67.1) family. In terms of tissue distribution, expressed in flowers and roots, and at a low level in leaves and stems. Detected in the cambial zone of the vascular bundles and in the region of lateral root initiation. Low expression in the vascular network of the petals and high in the stamen filaments and the gynoecium.

Its subcellular location is the membrane. Its function is as follows. Involved in the translocation of tetra- and pentapeptides across the cellular membrane in an energy-dependent manner. Also involved in transport of glutathione derivatives and metal complexes, and may be involved in stress resistance. The polypeptide is Oligopeptide transporter 6 (OPT6) (Arabidopsis thaliana (Mouse-ear cress)).